Consider the following 299-residue polypeptide: 4-hydroxy-tetrahydrodipicolinate synthase (299 aa).

Position 51 (threonine 51) interacts with pyruvate. Catalysis depends on tyrosine 139, which acts as the Proton donor/acceptor. The Schiff-base intermediate with substrate role is filled by lysine 167. Pyruvate is bound at residue isoleucine 209.

Belongs to the DapA family. In terms of assembly, homotetramer; dimer of dimers.

The protein resides in the cytoplasm. It carries out the reaction L-aspartate 4-semialdehyde + pyruvate = (2S,4S)-4-hydroxy-2,3,4,5-tetrahydrodipicolinate + H2O + H(+). It functions in the pathway amino-acid biosynthesis; L-lysine biosynthesis via DAP pathway; (S)-tetrahydrodipicolinate from L-aspartate: step 3/4. Functionally, catalyzes the condensation of (S)-aspartate-beta-semialdehyde [(S)-ASA] and pyruvate to 4-hydroxy-tetrahydrodipicolinate (HTPA). The sequence is that of 4-hydroxy-tetrahydrodipicolinate synthase from Methylobacterium radiotolerans (strain ATCC 27329 / DSM 1819 / JCM 2831 / NBRC 15690 / NCIMB 10815 / 0-1).